The following is a 691-amino-acid chain: Elongation factor G (691 aa).

The tr-type G domain occupies Glu-8 to Val-282. GTP is bound by residues Ala-17–Thr-24, Asp-81–His-85, and Asn-135–Asp-138.

The protein belongs to the TRAFAC class translation factor GTPase superfamily. Classic translation factor GTPase family. EF-G/EF-2 subfamily.

It localises to the cytoplasm. Its function is as follows. Catalyzes the GTP-dependent ribosomal translocation step during translation elongation. During this step, the ribosome changes from the pre-translocational (PRE) to the post-translocational (POST) state as the newly formed A-site-bound peptidyl-tRNA and P-site-bound deacylated tRNA move to the P and E sites, respectively. Catalyzes the coordinated movement of the two tRNA molecules, the mRNA and conformational changes in the ribosome. The sequence is that of Elongation factor G from Caldicellulosiruptor saccharolyticus (strain ATCC 43494 / DSM 8903 / Tp8T 6331).